The following is a 709-amino-acid chain: D-(-)-3-hydroxybutyrate oligomer hydrolase (709 aa).

The signal sequence occupies residues 1-26 (MTVFKTAPLLIAALAASSCGGGGSGA). The interval 58–77 (GLGRSGLQDDSPPGYAGSQP) is disordered. S305 acts as the Charge relay system in catalysis.

This sequence belongs to the D-(-)-3-hydroxybutyrate oligomer hydrolase family.

The protein resides in the secreted. The enzyme catalyses (3R)-hydroxybutanoate dimer + H2O = 2 (R)-3-hydroxybutanoate + H(+). The protein operates within lipid metabolism; butanoate metabolism. Participates in the degradation of poly-3-hydroxybutyrate (PHB). It works downstream of poly(3-hydroxybutyrate) depolymerase, hydrolyzing D(-)-3-hydroxybutyrate oligomers of various length (3HB-oligomers) into 3HB-monomers. This Paracidovorax citrulli (strain AAC00-1) (Acidovorax citrulli) protein is D-(-)-3-hydroxybutyrate oligomer hydrolase.